Consider the following 86-residue polypeptide: Small ribosomal subunit protein bS20 (86 aa).

Belongs to the bacterial ribosomal protein bS20 family.

Its function is as follows. Binds directly to 16S ribosomal RNA. The sequence is that of Small ribosomal subunit protein bS20 from Bifidobacterium longum subsp. infantis (strain ATCC 15697 / DSM 20088 / JCM 1222 / NCTC 11817 / S12).